The following is a 331-amino-acid chain: Phosphate acyltransferase (331 aa).

It belongs to the PlsX family. In terms of assembly, homodimer. Probably interacts with PlsY.

It localises to the cytoplasm. It catalyses the reaction a fatty acyl-[ACP] + phosphate = an acyl phosphate + holo-[ACP]. The protein operates within lipid metabolism; phospholipid metabolism. Catalyzes the reversible formation of acyl-phosphate (acyl-PO(4)) from acyl-[acyl-carrier-protein] (acyl-ACP). This enzyme utilizes acyl-ACP as fatty acyl donor, but not acyl-CoA. The polypeptide is Phosphate acyltransferase (Wolinella succinogenes (strain ATCC 29543 / DSM 1740 / CCUG 13145 / JCM 31913 / LMG 7466 / NCTC 11488 / FDC 602W) (Vibrio succinogenes)).